A 362-amino-acid chain; its full sequence is Glutamate 5-kinase (362 aa).

ATP is bound at residue K3. Residues S43, D128, and N140 each coordinate substrate. ATP-binding positions include 160 to 161 (TD) and 202 to 208 (TGGMRTK). The 82-residue stretch at 267–348 (AGAILVDAGA…REIENVLGYS (82 aa)) folds into the PUA domain.

The protein belongs to the glutamate 5-kinase family.

The protein resides in the cytoplasm. It catalyses the reaction L-glutamate + ATP = L-glutamyl 5-phosphate + ADP. It participates in amino-acid biosynthesis; L-proline biosynthesis; L-glutamate 5-semialdehyde from L-glutamate: step 1/2. In terms of biological role, catalyzes the transfer of a phosphate group to glutamate to form L-glutamate 5-phosphate. In Xanthomonas oryzae pv. oryzae (strain KACC10331 / KXO85), this protein is Glutamate 5-kinase.